A 545-amino-acid chain; its full sequence is Mediator of RNA polymerase II transcription subunit 17 (545 aa).

Positions 148–168 (TVPPSSLQFSRSQPPESKESD) are disordered. The segment covering 149 to 162 (VPPSSLQFSRSQPP) has biased composition (polar residues).

The protein belongs to the Mediator complex subunit 17 family. In terms of assembly, component of the Mediator complex. Interacts with med18, prk1 and rbp1.

The protein resides in the nucleus. In terms of biological role, component of the Mediator complex, a coactivator involved in the regulated transcription of nearly all RNA polymerase II-dependent genes. Mediator functions as a bridge to convey information from gene-specific regulatory proteins to the basal RNA polymerase II transcription machinery. Mediator is recruited to promoters by direct interactions with regulatory proteins and serves as a scaffold for the assembly of a functional preinitiation complex with RNA polymerase II and the general transcription factors. This Schizosaccharomyces pombe (strain 972 / ATCC 24843) (Fission yeast) protein is Mediator of RNA polymerase II transcription subunit 17 (med17).